The following is a 455-amino-acid chain: Nucleoside-triphosphatase (455 aa).

E168 (proton acceptor) is an active-site residue.

It belongs to the GDA1/CD39 NTPase family.

Its subcellular location is the nucleus. It catalyses the reaction a ribonucleoside 5'-triphosphate + H2O = a ribonucleoside 5'-diphosphate + phosphate + H(+). Might be involved in RNA transport out of nuclei. The polypeptide is Nucleoside-triphosphatase (Pisum sativum (Garden pea)).